Here is a 301-residue protein sequence, read N- to C-terminus: Olfactory receptor 10AG1 (301 aa).

At 1 to 16 (MEFVLLGFSDIPNLHW) the chain is on the extracellular side. A helical transmembrane segment spans residues 17-37 (MLFSIFLLMYLMILMCNGIII). The Cytoplasmic portion of the chain corresponds to 38-45 (LLIKIHPA). A helical transmembrane segment spans residues 46 to 66 (LQTPMYFFLSNFSLLEICYVT). At 67–90 (IIIPRMLMDIWTQKGNISLFACAT) the chain is on the extracellular side. N82 carries N-linked (GlcNAc...) asparagine glycosylation. C88 and C180 are oxidised to a cystine. Residues 91-111 (QMCFFLMLGGTECLLLTVMAY) traverse the membrane as a helical segment. At 112-130 (DRYVAICKPLQYPLVMNHK) the chain is on the cytoplasmic side. Residues 131–151 (VCIQLIIASWTITIPVVIGET) form a helical membrane-spanning segment. Topologically, residues 152–188 (CQIFLLPFCGTNTINHFFCDIPPILKLACGNIFVNEI) are extracellular. A helical membrane pass occupies residues 189–208 (TVHVVAVVFITVPFLLIVVS). At 209–228 (YGKIISNILKLSSARGKAKA) the chain is on the cytoplasmic side. The chain crosses the membrane as a helical span at residues 229–249 (FSTCSSHLIVVILFFGAGTIT). At 250 to 262 (YLQPKPHQFQRMG) the chain is on the extracellular side. A helical transmembrane segment spans residues 263-283 (KLISLFYTILIPTLNPIIYTL). Topologically, residues 284-301 (RNKDIMVALRKLLAKLLT) are cytoplasmic.

Belongs to the G-protein coupled receptor 1 family.

The protein localises to the cell membrane. In terms of biological role, odorant receptor. In Homo sapiens (Human), this protein is Olfactory receptor 10AG1 (OR10AG1).